A 692-amino-acid polypeptide reads, in one-letter code: MASVGSRLTRFYISRPGVIARRFLAHAGMDDMGVSLSRSSLERLEFDNVALKKLPLDPSTEPGVRQVRGSCFSRVQPTPLKNPEFVAVSAPALALLGLDAEEVLKDPLGPEYLSGSKVMPGSEPAAHCYCGHQFGQFAGQLGDGAACYLGEVKAPAGQSPELLRENPTGRWEIQVKGAGLTPYSRQADGRKVLRSSIREFLCSEAVFALGVPTTRAGSVVTSDSRVMRDIFYDGNPRMERCSVVLRIAPSFIRFGSFEIFKRADEFTGRQGPSYGHDELRTQMLEYVIENFYPEIHRNYPDLTERNTAFFKEVTVRTARLVAQWQCVGFCHGVLNTDNMSILGLTLDYGPFGFMDRFDPDFICNASDNSGRYSYQAQPAICRWNLARLAEALEPDLPPDRAEQVLDEYLPLYNDFYLSNMRKKLGLLRKEEPEDEMLITELMQTMHNTGADFTNTFRSLSQISCPTQEEAEDESETIKQATELLLHQSASLEELKAANRPSMDPRELAMLVSMAQSNPALFQMISDRGTVSRQLERLSRLKELMDTTEEQLRVKHTEHWSDWIQKYRQRLARECESGVDVKDVQTERVRVMNNNNPHVVLRNYIAQNAIAAAENGDFSEVQRVLKVLEKPFSVQEGLEQPGWMGRGGAAIPGERDETEEEGSNSSGAGARGLVPYDSKPPVWANEICVTUSS.

Residues 1–24 (MASVGSRLTRFYISRPGVIARRFL) constitute a mitochondrion transit peptide. 7 residues coordinate ATP: Gly-142, Gly-144, Lys-176, Asp-188, Gly-189, Arg-246, and Arg-253. Asp-337 serves as the catalytic Proton acceptor. Residues Asn-338 and Asp-347 each coordinate Mg(2+). Position 347 (Asp-347) interacts with ATP. The tract at residues 637–676 (LEQPGWMGRGGAAIPGERDETEEEGSNSSGAGARGLVPYD) is disordered. Sec-690 is a non-standard amino acid (selenocysteine).

This sequence belongs to the SELO family. Requires Mg(2+) as cofactor.

It is found in the mitochondrion. The enzyme catalyses L-tyrosyl-[protein] + ATP = O-(5'-adenylyl)-L-tyrosyl-[protein] + diphosphate. The catalysed reaction is L-threonyl-[protein] + ATP = 3-O-(5'-adenylyl)-L-threonyl-[protein] + diphosphate. It catalyses the reaction L-seryl-[protein] + ATP = 3-O-(5'-adenylyl)-L-seryl-[protein] + diphosphate. Functionally, catalyzes the transfer of adenosine 5'-monophosphate (AMP) to Ser, Thr and Tyr residues of target proteins (AMPylation). May be a redox-active mitochondrial selenoprotein which interacts with a redox target protein. The protein is Protein adenylyltransferase SelO-1, mitochondrial of Danio rerio (Zebrafish).